An 88-amino-acid chain; its full sequence is M-zodatoxin-Lt1a (88 aa).

The signal sequence occupies residues 1 to 22 (MKYFVVALALAVALVCIAESTA). A propeptide spanning residues 23–62 (YDVNEELENELDDLSDAAWLAKAAEDLQALDDFEESEESR) is cleaved from the precursor. The Processing quadruplet motif motif lies at 59 to 62 (EESR).

In terms of processing, cleavage of the propeptide depends on the processing quadruplet motif (XXXR, with at least one of X being E). Expressed by the venom gland.

It is found in the secreted. Its function is as follows. Has antimicrobial activity against Gram-positive bacteria (A.globiformis VKM Ac-1112 (MIC=0.5 uM), and B.subtilis VKM B-501 (MIC=1.0 uM)), Gram-negative bacteria (E.coli DH5-alpha (MIC=1.0 uM), E.coli MH1 (MIC=0.7 uM), and P.aeruginosa PAO1 (MIC=4.1 uM)), and yeasts (P.pastoris GS115 (MIC=17 uM), and S.cerevisiae Y190 (MIC&gt;33 uM)). Has a moderate hemolytic activity against rabbit erythrocytes. Causes paralysis, but is not lethal when injected into insect (M.domestica) larvae. This is M-zodatoxin-Lt1a from Lachesana tarabaevi (Spider).